The primary structure comprises 295 residues: Protoheme IX farnesyltransferase (295 aa).

The next 9 membrane-spanning stretches (helical) occupy residues 8 to 28 (VTKP…FLLA), 35 to 55 (YPLF…GCVF), 84 to 104 (ASLV…WFGA), 107 to 127 (LACW…SLYM), 132 to 152 (VYGT…GYCA), 162 to 182 (AILL…IAIF), 208 to 228 (ITLY…GGYA), 233 to 253 (LVVA…GYKV), and 264 to 284 (FVFS…DFMV).

The protein belongs to the UbiA prenyltransferase family. Protoheme IX farnesyltransferase subfamily.

The protein resides in the cell inner membrane. The enzyme catalyses heme b + (2E,6E)-farnesyl diphosphate + H2O = Fe(II)-heme o + diphosphate. It participates in porphyrin-containing compound metabolism; heme O biosynthesis; heme O from protoheme: step 1/1. Converts heme B (protoheme IX) to heme O by substitution of the vinyl group on carbon 2 of heme B porphyrin ring with a hydroxyethyl farnesyl side group. This chain is Protoheme IX farnesyltransferase, found in Klebsiella pneumoniae subsp. pneumoniae (strain ATCC 700721 / MGH 78578).